Reading from the N-terminus, the 238-residue chain is Urease subunit alpha (238 aa).

A urease gamma region spans residues 1 to 102 (MKLTPKELDK…LVTVHTPIES (102 aa)). Residues 103–238 (KGKLVPGELF…DDNYVKTIKE (136 aa)) form a urease beta region.

It in the N-terminal section; belongs to the urease gamma subunit family. The protein in the C-terminal section; belongs to the urease beta subunit family. In terms of assembly, heterohexamer of 3 UreA (alpha) and 3 UreB (beta) subunits.

The protein resides in the cytoplasm. It carries out the reaction urea + 2 H2O + H(+) = hydrogencarbonate + 2 NH4(+). It participates in nitrogen metabolism; urea degradation; CO(2) and NH(3) from urea (urease route): step 1/1. The chain is Urease subunit alpha from Helicobacter acinonychis (strain Sheeba).